A 79-amino-acid chain; its full sequence is Acyl carrier protein (79 aa).

In terms of domain architecture, Carrier spans 2–79; sequence ASKEEILAGL…QDAVDFIXGA (78 aa). Serine 40 is subject to O-(pantetheine 4'-phosphoryl)serine.

It belongs to the acyl carrier protein (ACP) family. 4'-phosphopantetheine is transferred from CoA to a specific serine of apo-ACP by AcpS. This modification is essential for activity because fatty acids are bound in thioester linkage to the sulfhydryl of the prosthetic group.

It localises to the cytoplasm. The protein operates within lipid metabolism; fatty acid biosynthesis. Functionally, carrier of the growing fatty acid chain in fatty acid biosynthesis. This is Acyl carrier protein from Myxococcus xanthus.